We begin with the raw amino-acid sequence, 380 residues long: Actinidain (380 aa).

A signal peptide spans 1–24 (MGLPKSFVSMSLLFFSTLLILSLA). Residues 25–126 (FNAKNLTQRT…NRYEPRVGQV (102 aa)) constitute a propeptide, activation peptide. N-linked (GlcNAc...) asparagine glycosylation is found at Asn-29, Asn-81, and Asn-111. Disulfide bonds link Cys-148–Cys-191, Cys-182–Cys-224, and Cys-282–Cys-332. Cys-151 is a catalytic residue. Residues His-288 and Asn-308 contribute to the active site.

The protein belongs to the peptidase C1 family. Fruit, present in small cells of the outer pericarp of mature fruit, but not large cells.

The catalysed reaction is Specificity close to that of papain.. Its function is as follows. Cysteine protease responsible for the cleavage of kiwellin into kissper and KiTH. The chain is Actinidain from Actinidia deliciosa (Kiwi).